A 302-amino-acid chain; its full sequence is Probable alpha-L-glutamate ligase 1 (302 aa).

In terms of domain architecture, ATP-grasp spans 104–287; that stretch reads MQLLSRKGIG…VANMIIEFIE (184 aa). ATP-binding positions include Lys141, 178-179, Asp187, and 211-213; these read EY and RSN. Residues Asp248, Glu260, and Asn262 each coordinate Mg(2+). Mn(2+) contacts are provided by Asp248, Glu260, and Asn262.

It belongs to the RimK family. Requires Mg(2+) as cofactor. Mn(2+) serves as cofactor.

This is Probable alpha-L-glutamate ligase 1 from Pseudoalteromonas atlantica (strain T6c / ATCC BAA-1087).